Reading from the N-terminus, the 276-residue chain is Putative ABC transporter ATP-binding protein MA_4021 (276 aa).

The region spanning 5–247 (FDLKNISYSY…DLNLLLSTNL (243 aa)) is the ABC transporter domain. 38 to 45 (GSNGSGKS) serves as a coordination point for ATP.

This sequence belongs to the ABC transporter superfamily.

It localises to the cell membrane. Probably part of an ABC transporter complex. Responsible for energy coupling to the transport system. The polypeptide is Putative ABC transporter ATP-binding protein MA_4021 (Methanosarcina acetivorans (strain ATCC 35395 / DSM 2834 / JCM 12185 / C2A)).